The chain runs to 919 residues: Calcium-activated chloride channel regulator 4 (919 aa).

Positions 1–21 are cleaved as a signal peptide; that stretch reads MGLFRGFVFLLVLCLLHQSNT. The segment at 45–199 is metalloprotease domain; the sequence is DEKIIEQIED…GISGRNRVYK (155 aa). N-linked (GlcNAc...) asparagine glycosylation occurs at N75. Residue H155 coordinates Zn(2+). E156 is an active-site residue. Residues H159 and D166 each contribute to the Zn(2+) site. The VWFA domain occupies 306-476; sequence IVCLVLDKSG…NGLIDAFGAL (171 aa). N-linked (GlcNAc...) asparagine glycans are attached at residues N340, N504, N542, N588, N628, N811, N832, N837, and N852. Residues 870-893 form a disordered region; sequence ANPDDIDPTPTPTPTPTPDKSHNS. The chain crosses the membrane as a helical span at residues 895–915; that stretch reads VNISTLVLSVIGSVVIVNFIL.

The protein belongs to the CLCR family. The translation product is autoproteolytically cleaved by the metalloprotease domain in the endoplasmic reticulum into a N-terminal and a C-terminal products that remain physically associated with each other. The cleavage is necessary for calcium-activated chloride channel (CaCC) activation activity. As to expression, primarily expressed in the digestive tract, mainly in colon. Detected in smaller amounts in brain, urogenital organs, testis, and salivary and mammary glands. Highly expressed in the epithelial layer and submucosal gland of the inferior turbinate mucosa. Lower levels in the epithelial layer of nasal polyp.

The protein resides in the cell membrane. It localises to the apical cell membrane. Its subcellular location is the secreted. In terms of biological role, may be involved in mediating calcium-activated chloride conductance. In Homo sapiens (Human), this protein is Calcium-activated chloride channel regulator 4 (CLCA4).